Consider the following 265-residue polypeptide: Tryptophan synthase alpha chain (265 aa).

Residues Glu50 and Asp61 each act as proton acceptor in the active site.

This sequence belongs to the TrpA family. In terms of assembly, tetramer of two alpha and two beta chains.

The enzyme catalyses (1S,2R)-1-C-(indol-3-yl)glycerol 3-phosphate + L-serine = D-glyceraldehyde 3-phosphate + L-tryptophan + H2O. It functions in the pathway amino-acid biosynthesis; L-tryptophan biosynthesis; L-tryptophan from chorismate: step 5/5. Its function is as follows. The alpha subunit is responsible for the aldol cleavage of indoleglycerol phosphate to indole and glyceraldehyde 3-phosphate. The chain is Tryptophan synthase alpha chain from Trichodesmium erythraeum (strain IMS101).